The primary structure comprises 489 residues: 6-phosphogluconate dehydrogenase, decarboxylating 1 (489 aa).

NADP(+) is bound by residues 9–14 and 32–34; these read GLAVMG and NRT. Phosphoserine is present on Ser-50. Residues 74-76 and Asn-102 contribute to the NADP(+) site; that span reads VKA. Residues Asn-102 and 128-130 contribute to the substrate site; that span reads SGG. The active-site Proton acceptor is Lys-182. Position 185–186 (185–186) interacts with substrate; the sequence is HN. Glu-189 (proton donor) is an active-site residue. The substrate site is built by Tyr-190, Lys-259, Arg-286, Arg-446, and His-452.

It belongs to the 6-phosphogluconate dehydrogenase family. In terms of assembly, homodimer.

The protein localises to the cytoplasm. The catalysed reaction is 6-phospho-D-gluconate + NADP(+) = D-ribulose 5-phosphate + CO2 + NADPH. It participates in carbohydrate degradation; pentose phosphate pathway; D-ribulose 5-phosphate from D-glucose 6-phosphate (oxidative stage): step 3/3. In terms of biological role, catalyzes the oxidative decarboxylation of 6-phosphogluconate to ribulose 5-phosphate and CO(2), with concomitant reduction of NADP to NADPH. This Saccharomyces cerevisiae (strain ATCC 204508 / S288c) (Baker's yeast) protein is 6-phosphogluconate dehydrogenase, decarboxylating 1 (GND1).